The primary structure comprises 708 residues: Polyribonucleotide nucleotidyltransferase (708 aa).

2 residues coordinate Mg(2+): aspartate 488 and aspartate 494. Residues 555–615 form the KH domain; sequence PIIKVTKVDP…ENVDKAIELI (61 aa). The region spanning 625–692 is the S1 motif domain; sequence GEVLEGKVTR…DLGRLQFKRV (68 aa).

The protein belongs to the polyribonucleotide nucleotidyltransferase family. It depends on Mg(2+) as a cofactor.

Its subcellular location is the cytoplasm. It catalyses the reaction RNA(n+1) + phosphate = RNA(n) + a ribonucleoside 5'-diphosphate. Its function is as follows. Involved in mRNA degradation. Catalyzes the phosphorolysis of single-stranded polyribonucleotides processively in the 3'- to 5'-direction. This Thermotoga sp. (strain RQ2) protein is Polyribonucleotide nucleotidyltransferase.